The primary structure comprises 231 residues: L-ribulose-5-phosphate 4-epimerase AraD (231 aa).

Substrate contacts are provided by residues 27–28 (GN), 44–45 (SG), and 74–75 (SS). Zn(2+) contacts are provided by aspartate 76, histidine 95, and histidine 97. The Proton donor/acceptor role is filled by aspartate 120. Zn(2+) is bound at residue histidine 171. Tyrosine 229 acts as the Proton donor/acceptor in catalysis.

The protein belongs to the aldolase class II family. AraD/FucA subfamily. In terms of assembly, homotetramer. Zn(2+) serves as cofactor.

The enzyme catalyses L-ribulose 5-phosphate = D-xylulose 5-phosphate. It participates in carbohydrate degradation; L-arabinose degradation via L-ribulose; D-xylulose 5-phosphate from L-arabinose (bacterial route): step 3/3. With respect to regulation, inhibited by glycolohydroxamate at concentration above 0.1 mM. Involved in the degradation of L-arabinose. Catalyzes the interconversion of L-ribulose 5-phosphate (LRu5P) and D-xylulose 5-phosphate (D-Xu5P) via a retroaldol/aldol mechanism (carbon-carbon bond cleavage analogous to a class II aldolase reaction). The polypeptide is L-ribulose-5-phosphate 4-epimerase AraD (Escherichia coli (strain K12)).